The primary structure comprises 235 residues: Large ribosomal subunit protein uL4 (235 aa).

Residues 45–75 (RAGTASTKTRGEVSGGGRKPWPQKHTGRARH) are disordered. A compositionally biased stretch (basic residues) spans 65-75 (WPQKHTGRARH).

This sequence belongs to the universal ribosomal protein uL4 family. In terms of assembly, part of the 50S ribosomal subunit.

One of the primary rRNA binding proteins, this protein initially binds near the 5'-end of the 23S rRNA. It is important during the early stages of 50S assembly. It makes multiple contacts with different domains of the 23S rRNA in the assembled 50S subunit and ribosome. Functionally, forms part of the polypeptide exit tunnel. This chain is Large ribosomal subunit protein uL4, found in Thermotoga petrophila (strain ATCC BAA-488 / DSM 13995 / JCM 10881 / RKU-1).